The primary structure comprises 246 residues: Small ribosomal subunit protein uS2 (246 aa).

Belongs to the universal ribosomal protein uS2 family.

The polypeptide is Small ribosomal subunit protein uS2 (Stutzerimonas stutzeri (strain A1501) (Pseudomonas stutzeri)).